Reading from the N-terminus, the 92-residue chain is Signal recognition particle 19 kDa protein (92 aa).

This sequence belongs to the SRP19 family. As to quaternary structure, part of the signal recognition particle protein translocation system, which is composed of SRP and FtsY. Archaeal SRP consists of a 7S RNA molecule of 300 nucleotides and two protein subunits: SRP54 and SRP19.

The protein localises to the cytoplasm. In terms of biological role, involved in targeting and insertion of nascent membrane proteins into the cytoplasmic membrane. Binds directly to 7S RNA and mediates binding of the 54 kDa subunit of the SRP. This Methanosphaera stadtmanae (strain ATCC 43021 / DSM 3091 / JCM 11832 / MCB-3) protein is Signal recognition particle 19 kDa protein.